The sequence spans 262 residues: Orotidine 5'-phosphate decarboxylase (262 aa).

Residues aspartate 35, 57-59 (KTH), 89-98 (DRKFADIGNT), tyrosine 215, and arginine 233 each bind substrate. Lysine 91 (proton donor) is an active-site residue.

This sequence belongs to the OMP decarboxylase family.

It catalyses the reaction orotidine 5'-phosphate + H(+) = UMP + CO2. It participates in pyrimidine metabolism; UMP biosynthesis via de novo pathway; UMP from orotate: step 2/2. This Pichia kudriavzevii (Yeast) protein is Orotidine 5'-phosphate decarboxylase (URA3).